The following is a 207-amino-acid chain: MALHMILVMVSLLPLLEAQNPEHVNITIGDPITNETLSWLSDKWFFIGAAVLNPDYRQEIQKTQMVFFNLTPNLINDTMELREYHTIDDHCVYNSTHLGIQRENGTLSKYVGGVKIFADLIVLKMHGAFMLAFDLKDEKKRGLSLNAKRPDITPELREVFQKAVTHVGMDESEIIFVDWKKDRCSQQEKQQLELEKETKKDPEEGQA.

The signal sequence occupies residues 1–18 (MALHMILVMVSLLPLLEA). Q19 is modified (pyrrolidone carboxylic acid). N-linked (GlcNAc...) asparagine glycosylation is found at N25, N34, N76, N94, and N104. C91 and C184 are oxidised to a cystine. A disordered region spans residues 188 to 207 (EKQQLELEKETKKDPEEGQA).

Belongs to the calycin superfamily. Lipocalin family. As to expression, expressed by the liver and secreted in plasma.

It is found in the secreted. In terms of biological role, functions as a transport protein in the blood stream. Binds various ligands in the interior of its beta-barrel domain. Appears to function in modulating the activity of the immune system during the acute-phase reaction. This chain is Alpha-1-acid glycoprotein 2 (Orm2), found in Mus musculus (Mouse).